Here is a 188-residue protein sequence, read N- to C-terminus: Calcium load-activated calcium channel (188 aa).

Residues 1 to 4 (MSTM) are Lumenal-facing. A helical membrane pass occupies residues 5–32 (FADTILIVFISICTALLAEGITWVLVYR). Positions 32-89 (RTDKYKRLKAEVEKQSKKLEKKKETITESAGRQQKKKIERQEEKLKNNNRDLSMVRMK) form a coiled coil. Residues 33–86 (TDKYKRLKAEVEKQSKKLEKKKETITESAGRQQKKKIERQEEKLKNNNRDLSMV) are Cytoplasmic-facing. Residues 87 to 106 (RMKSMFAIGFCFTALMGMFN) form a helical membrane-spanning segment. At 107–120 (SIFDGRVVAKLPFV) the chain is on the lumenal side. An intramembrane segment occupies 121–130 (PLSYIQGLSH). Topologically, residues 131-140 (RNLLGEDYTD) are lumenal. A helical membrane pass occupies residues 141-162 (CSFIFLYILCTMSIRQNIQKML). The Cytoplasmic segment spans residues 163 to 188 (GLAPSRAATKQAGGFLGPPPQAAKFS).

It belongs to the TMCO1 family. As to quaternary structure, homodimer and homotetramer. Component of the multi-pass translocon (MPT) complex.

It is found in the endoplasmic reticulum membrane. The protein resides in the golgi apparatus membrane. Its function is as follows. Calcium-selective channel required to prevent calcium stores from overfilling, thereby playing a key role in calcium homeostasis. In response to endoplasmic reticulum (ER) overloading, assembles into a homotetramer, forming a functional calcium-selective channel, regulating the calcium content in endoplasmic reticulum store. Component of the multi-pass translocon (MPT) complex that mediates insertion of multi-pass membrane proteins into the lipid bilayer of membranes. This is Calcium load-activated calcium channel from Danio rerio (Zebrafish).